Here is a 210-residue protein sequence, read N- to C-terminus: Histidine biosynthesis bifunctional protein HisIE (210 aa).

Residues Met-1–Trp-121 are phosphoribosyl-AMP cyclohydrolase. Residues Leu-122–Lys-210 are phosphoribosyl-ATP pyrophosphohydrolase.

It in the N-terminal section; belongs to the PRA-CH family. This sequence in the C-terminal section; belongs to the PRA-PH family.

Its subcellular location is the cytoplasm. It carries out the reaction 1-(5-phospho-beta-D-ribosyl)-ATP + H2O = 1-(5-phospho-beta-D-ribosyl)-5'-AMP + diphosphate + H(+). The enzyme catalyses 1-(5-phospho-beta-D-ribosyl)-5'-AMP + H2O = 1-(5-phospho-beta-D-ribosyl)-5-[(5-phospho-beta-D-ribosylamino)methylideneamino]imidazole-4-carboxamide. It participates in amino-acid biosynthesis; L-histidine biosynthesis; L-histidine from 5-phospho-alpha-D-ribose 1-diphosphate: step 2/9. The protein operates within amino-acid biosynthesis; L-histidine biosynthesis; L-histidine from 5-phospho-alpha-D-ribose 1-diphosphate: step 3/9. This chain is Histidine biosynthesis bifunctional protein HisIE (hisI), found in Vibrio cholerae serotype O1 (strain ATCC 39315 / El Tor Inaba N16961).